The following is a 488-amino-acid chain: Phenylalanine--tRNA ligase alpha subunit (488 aa).

L-phenylalanine-binding positions include threonine 315, 354–356, phenylalanine 394, and phenylalanine 419; that span reads QLD.

Belongs to the class-II aminoacyl-tRNA synthetase family. Phe-tRNA synthetase alpha subunit type 2 subfamily. As to quaternary structure, tetramer of two alpha and two beta subunits. Mg(2+) serves as cofactor.

The protein resides in the cytoplasm. It catalyses the reaction tRNA(Phe) + L-phenylalanine + ATP = L-phenylalanyl-tRNA(Phe) + AMP + diphosphate + H(+). The protein is Phenylalanine--tRNA ligase alpha subunit of Pyrobaculum calidifontis (strain DSM 21063 / JCM 11548 / VA1).